The primary structure comprises 1407 residues: MKDLLKFLKAQTKTEEFDAIKIALASPDMIRSWSFGEVKKPETINYRTFKPERDGLFCARIFGPVKDYECLCGKYKRLKHRGVICEKCGVEVTQTKVRRERMGHIELASPTAHIWFLKSLPSRIGLLLDMPLRDIERVLYFESYVVIEGGMTNLERQQILTEEQYLDALEEFGDEFDAKMGAEAIQALLKSMDLEQECETLREELNETNSETKRKKLTKRIKLLEAFVQSGNKPEWMILTVLPVLPPDLRPLVPLDGGRFATSDLNDLYRRVINRNNRLKRLLDLAAPDIIVRNEKRMLQEAVDALLDNGRRGRAITGSNKRPLKSLADMIKGKQGRFRQNLLGKRVDYSGRSVITVGPYLRLHQCGLPKKMALELFKPFIYGKLELRGLATTIKAAKKMVEREEAVVWDILDEVIREHPVLLNRAPTLHRLGIQAFEPVLIEGKAIQLHPLVCAAYNADFDGDQMAVHVPLTLEAQLEARALMMSTNNILSPANGEPIIVPSQDVVLGLYYMTRDCVNAKGEGMVLTGPKEAERIYRAGLASLHARVKVRITEYEKDANGEFVAKTSLKDTTIGRAILWMIVPKGLPFSIVNQALGKKAISKMLNTCYRILGLKPTVIFADQTMYTGFAYAARSGASVGIDDMVIPEKKHEIISEAEAEVAEIQEQFQSGLVTAGERYNKVIDIWAAANDRVSKAMMDNLQTETVINRDGQEEQQVSFNSIYMMADSGARGSAAQIRQLAGMRGLMAKPDGSIIETPITANFREGLNVLQYFISTHGARKGLADTALKTANSGYLTRRLVDVAQDLVVTEDDCGTHEGILMTPVIEGGDVKEPLRDRVLGRVTAEDVLKPGTADILVPRNTLLHEQWCDLLEENSVDAVKVRSVVSCDTDFGVCAHCYGRDLARGHIINKGEAIGVIAAQSIGEPGTQLTMRTFHIGGAASRAAAESSIQVKNKGSIRLSNAKSVVNSSGKLVITSRNTELKLIDEFGRTKESYKVPYGSVMAKGDGEQVAGGETVANWDPHTMPVITEVSGFVRFTDMIDGQTITRQTDELTGLSSLVVLDSAERTTGGKDLRPALKIVDAQGNDVLIPGTDMPAQYFLPGKAIVQLEDGVQISSGDTLARVPQESGGTKDITGGLPRVADLFEARRPKEPAILAEISGIISFGKETKGKRRLVITPVDGSEPYEEMIPKWRQLNVFEGERVERGDVVSDGPEAPHDILRLRGVHAVTRYIVNEVQDVYRLQGVKINDKHIEVIVRQMLRKATIENAGSSDFLEGEQVEYSRVKIANRDLEANGKVGATFSRDLLGITKASLATESFISAASFQETTRVLTEAAVAGKRDELRGLKENVIVGRLIPAGTGYAYHQDRMRRRAAGELPAAPQVTAEDASASLAELLNAGLGGSDND.

Residues Cys-70, Cys-72, Cys-85, and Cys-88 each contribute to the Zn(2+) site. Mg(2+) contacts are provided by Asp-460, Asp-462, and Asp-464. 4 residues coordinate Zn(2+): Cys-814, Cys-888, Cys-895, and Cys-898.

The protein belongs to the RNA polymerase beta' chain family. As to quaternary structure, the RNAP catalytic core consists of 2 alpha, 1 beta, 1 beta' and 1 omega subunit. When a sigma factor is associated with the core the holoenzyme is formed, which can initiate transcription. Mg(2+) is required as a cofactor. It depends on Zn(2+) as a cofactor.

It catalyses the reaction RNA(n) + a ribonucleoside 5'-triphosphate = RNA(n+1) + diphosphate. Its function is as follows. DNA-dependent RNA polymerase catalyzes the transcription of DNA into RNA using the four ribonucleoside triphosphates as substrates. The chain is DNA-directed RNA polymerase subunit beta' from Citrobacter koseri (strain ATCC BAA-895 / CDC 4225-83 / SGSC4696).